Reading from the N-terminus, the 1202-residue chain is Calmodulin-binding transcription activator 2 (1202 aa).

The CG-1 DNA-binding region spans 30–155; the sequence is RCPLLPPERL…YLNVPALEDC (126 aa). The Nuclear localization signal signature appears at 79–86; that stretch reads RKKVKYRK. Disordered regions lie at residues 263 to 322, 361 to 409, and 421 to 491; these read SIPH…SRGG, GTEP…AHTP, and PQAA…LFGG. Residues 270 to 283 show a composition bias toward pro residues; that stretch reads PEPPPLIAPLPPEL. 2 stretches are compositionally biased toward low complexity: residues 289–299 and 313–322; these read SPSSSSSSSSS and TSRGGSSRGG. 2 stretches are compositionally biased toward pro residues: residues 365 to 374 and 460 to 476; these read SAPPAPPSPA and PPIP…PAPL. The 79-residue stretch at 537–615 folds into the IPT/TIG domain; sequence DFSPEWSYPE…LSASVLFEYR (79 aa). 3 ANK repeats span residues 712 to 745, 757 to 787, and 791 to 821; these read MSLL…DLEQ, CTPL…SIPD, and RLPL…SVEP. 2 disordered regions span residues 817 to 874 and 906 to 929; these read PSVE…ASEM and PLSS…ADSP. Low complexity-rich tracts occupy residues 826–846 and 906–917; these read SPPS…SELS and PLSSLPALPPAS. 2 IQ domains span residues 1049–1078 and 1102–1131; these read YEAA…AAVI and TQAA…AVLI.

The protein belongs to the CAMTA family. As to quaternary structure, may interact with calmodulin. In terms of tissue distribution, detected in brain. Expressed at constant levels throughout the cell cycle in neuroblastoma cell lines.

The protein localises to the nucleus. Transcription activator. May act as tumor suppressor. The protein is Calmodulin-binding transcription activator 2 (CAMTA2) of Homo sapiens (Human).